A 110-amino-acid chain; its full sequence is UPF0060 membrane protein ASA_2267 (110 aa).

Helical transmembrane passes span 7–27, 33–53, 63–83, and 87–107; these read IGLFLITAVAEIVGCYLPYLW, SVWLLLPAGLSLVLFAWLLSL, AAYGGVYIFVAILWLWLVDGI, and LWDLVGSLVALFGMAIIMFAP.

It belongs to the UPF0060 family.

The protein localises to the cell inner membrane. This chain is UPF0060 membrane protein ASA_2267, found in Aeromonas salmonicida (strain A449).